Here is a 1150-residue protein sequence, read N- to C-terminus: BAI1-associated protein 3 (1150 aa).

The interval 22–44 (RRKTEQEPEVTNSQEPPTGAWKP) is disordered. In terms of domain architecture, C2 1 spans 139 to 298 (SSEEHMEAIM…VKSARANGTA (160 aa)). The Ca(2+) site is built by Asp-174 and Asp-180. The tract at residues 193-214 (APQEPSGQKEQRFGFRKGSKRS) is disordered. Ca(2+) is bound by residues Asp-258 and Asp-260. One can recognise an MHD1 domain in the interval 626 to 747 (FELYLTLADT…EASLFYTELL (122 aa)). The MHD2 domain maps to 851-959 (DEAVAPLLKY…CSTRECIEQF (109 aa)). The C2 2 domain occupies 973-1099 (RFGRLTVRCH…GIARPHVGGG (127 aa)). The Ca(2+) site is built by Leu-1003, Asp-1004, Asp-1010, Asp-1068, Asp-1070, Ser-1073, and Asp-1076.

This sequence belongs to the unc-13 family. As to quaternary structure, interacts with ADGRB1, this interaction is direct. Interacts with endosomal SNARE proteins VAMP3, VAMP4, STX6 and STX16; this interaction is increased in the presence of calcium. Ca(2+) is required as a cofactor. In terms of tissue distribution, prominently expressed in brain structures including hypothalamus, amygdala, stria terminalis and periaqueductal gray (at protein level). Expressed in nonneuronal tissues, including placenta, lung, pancreas, spleen, and testes. Within placenta, expression is restricted to the syncytiotrophoblasts.

It is found in the cytoplasm. The protein resides in the cytosol. It localises to the recycling endosome membrane. The protein localises to the late endosome membrane. Its subcellular location is the golgi apparatus. It is found in the trans-Golgi network membrane. The protein resides in the cell membrane. Functions in endosome to Golgi retrograde transport. In response to calcium influx, may interact with SNARE fusion receptors and membrane phospholipids to mediate endosome fusion with the trans-Golgi network. By promoting the recycling of secretory vesicle transmembrane proteins, it indirectly controls dense-core secretory vesicle biogenesis, maturation and their ability to mediate the constitutive and regulated secretion of neurotransmitters and hormones. May regulate behavior and food intake by controlling calcium-stimulated exocytosis of neurotransmitters including NPY and serotonin and hormones like insulin. Proposed to play a role in hypothalamic neuronal firing by modulating gamma-aminobutyric acid (GABA)ergic inhibitory neurotransmission. The polypeptide is BAI1-associated protein 3 (Mus musculus (Mouse)).